The chain runs to 165 residues: Disulfide bond formation protein B (165 aa).

The Cytoplasmic segment spans residues 1 to 16 (MTILNSLNQFSKGRLS). A helical transmembrane segment spans residues 17 to 33 (WLLLLLFVVFFEACALY). The Periplasmic portion of the chain corresponds to 34–51 (FQHVMMLAPCVMCIYERV). Residues Cys-43 and Cys-46 are joined by a disulfide bond. A helical transmembrane segment spans residues 52 to 67 (AMMGVGVAAIVGLMAP). Over 68–74 (NNPIFRW) the chain is Cytoplasmic. A helical transmembrane segment spans residues 75 to 92 (LGLIGWGLSSYKGLLLAQ). Topologically, residues 93-147 (QHVDYQFNPSPFATCDLFVTFPSWRPLNQWAPWIFEAYGDCSKIVWQFLDLSMPQ) are periplasmic. An intrachain disulfide couples Cys-107 to Cys-133. A helical transmembrane segment spans residues 148–165 (WLVVIFAGNLIALALIVI).

Belongs to the DsbB family.

Its subcellular location is the cell inner membrane. Its function is as follows. Required for disulfide bond formation in some periplasmic proteins. Acts by oxidizing the DsbA protein. This Vibrio alginolyticus protein is Disulfide bond formation protein B.